A 389-amino-acid polypeptide reads, in one-letter code: Chalcone synthase A (389 aa).

The active site involves Cys-164.

Belongs to the thiolase-like superfamily. Chalcone/stilbene synthases family. Major expressed member of the gene family in various floral tissues and in seedlings treated with UV light. It is relatively low expressed in tissue culture material.

It catalyses the reaction (E)-4-coumaroyl-CoA + 3 malonyl-CoA + 3 H(+) = 2',4,4',6'-tetrahydroxychalcone + 3 CO2 + 4 CoA. It functions in the pathway secondary metabolite biosynthesis; flavonoid biosynthesis. In terms of biological role, the primary product of this enzyme is 4,2',4',6'-tetrahydroxychalcone (also termed naringenin-chalcone or chalcone) which can under specific conditions spontaneously isomerize into naringenin. The chain is Chalcone synthase A (CHSA) from Petunia hybrida (Petunia).